We begin with the raw amino-acid sequence, 208 residues long: Methylthioribulose-1-phosphate dehydratase (208 aa).

Positions 98 and 100 each coordinate Zn(2+).

It belongs to the aldolase class II family. MtnB subfamily. Zn(2+) is required as a cofactor.

The enzyme catalyses 5-(methylsulfanyl)-D-ribulose 1-phosphate = 5-methylsulfanyl-2,3-dioxopentyl phosphate + H2O. The protein operates within amino-acid biosynthesis; L-methionine biosynthesis via salvage pathway; L-methionine from S-methyl-5-thio-alpha-D-ribose 1-phosphate: step 2/6. Catalyzes the dehydration of methylthioribulose-1-phosphate (MTRu-1-P) into 2,3-diketo-5-methylthiopentyl-1-phosphate (DK-MTP-1-P). This chain is Methylthioribulose-1-phosphate dehydratase, found in Marinobacter nauticus (strain ATCC 700491 / DSM 11845 / VT8) (Marinobacter aquaeolei).